The sequence spans 870 residues: Protein csx2 (870 aa).

A disordered region spans residues 212 to 251; the sequence is TSPEISDAPPLSGNVDPLPINSPPLTNPVARDIDQTEPED. Residues 510 to 614 enclose the PH domain; sequence TSAKQGLLLA…WIEAIQYSIS (105 aa). A phosphoserine mark is found at Ser625, Ser653, and Ser655. Positions 647–672 are disordered; that stretch reads RVASVTSPSRHNSDSKEKKQTKSPSL. A compositionally biased stretch (basic and acidic residues) spans 657 to 666; that stretch reads HNSDSKEKKQ. One can recognise an Arf-GAP domain in the interval 670–791; the sequence is PSLVKTLKEM…RFIKSSFSHD (122 aa). The C4-type zinc-finger motif lies at 686–710; sequence CADCNTTARVEWCAINFPVVLCIDC.

The polypeptide is Protein csx2 (csx2) (Schizosaccharomyces pombe (strain 972 / ATCC 24843) (Fission yeast)).